The following is a 252-amino-acid chain: Electron transfer flavoprotein subunit beta (252 aa).

It belongs to the ETF beta-subunit/FixA family. Heterodimer of an alpha and a beta subunit. AMP is required as a cofactor.

It is found in the cytoplasm. Its pathway is lipid metabolism; butanoate metabolism. Functionally, part of an electron transfer flavoprotein involved in syntrophic growth of S.wolfei with butyrate. Probably receives electrons from butyryl-CoA dehydrogenases, and transfers them to the membrane-bound quinone oxidoreductase Swol_0698. This is Electron transfer flavoprotein subunit beta from Syntrophomonas wolfei subsp. wolfei (strain DSM 2245B / Goettingen).